The following is a 220-amino-acid chain: Claudin-3 (220 aa).

Residues 1-8 (MSMGLEIT) lie on the Cytoplasmic side of the membrane. A helical membrane pass occupies residues 9–29 (GTALAVLGWLGTIVCCALPMW). Residues 30 to 80 (RVSAFIGSNIITSQNIWEGLWMNCVVQSTGQMQCKVYDSLLALPQDLQAAR) are Extracellular-facing. The chain crosses the membrane as a helical span at residues 81 to 101 (ALIVVAILLAAFGLLVALVGA). Topologically, residues 102–115 (QCTNCVQDDTAKAK) are cytoplasmic. Residues 116–136 (ITIVAGVLFLLAALLTLVPVS) form a helical membrane-spanning segment. Topologically, residues 137–159 (WSANTIIRDFYNPVVPEAQKREM) are extracellular. Residues 160–180 (GAGLYVGWAAAALQLLGGALL) traverse the membrane as a helical segment. The Cytoplasmic segment spans residues 181–220 (CCSCPPREKKYTATKVVYSAPRSTGPGASLGTGYDRKDYV). A Phosphotyrosine modification is found at tyrosine 198. Phosphoserine is present on residues serine 199 and serine 209. The segment at 219–220 (YV) is interactions with TJP1, TJP2 and TJP3.

Belongs to the claudin family. In terms of assembly, can form homo- and heteropolymers with other CLDN. Homopolymers interact with CLDN1 and CLDN2 homopolymers. Interacts in cis (within the same plasma membrane) with CLDN19. Directly interacts with TJP1/ZO-1, TJP2/ZO-2 and TJP3/ZO-3.

The protein localises to the cell junction. The protein resides in the tight junction. It localises to the cell membrane. Functionally, barrier-forming claudin. Plays a major role in tight junction-specific obliteration of the intercellular space, through calcium-independent cell-adhesion activity. The polypeptide is Claudin-3 (CLDN3) (Homo sapiens (Human)).